Consider the following 844-residue polypeptide: Janus kinase and microtubule-interacting protein 3 (844 aa).

A coiled-coil region spans residues 8 to 258 (SRAKGDKAEA…QLSQVREADR (251 aa)). The disordered stretch occupies residues 250–290 (LSQVREADRHPGSPRRELPHAAGAGDASDHSGSPEQQLDEK). Basic and acidic residues predominate over residues 254–268 (READRHPGSPRRELP). The segment covering 269–282 (HAAGAGDASDHSGS) has biased composition (low complexity). A coiled-coil region spans residues 289 to 421 (EKDARRFQLK…DELSKTLETA (133 aa)). A Phosphoserine modification is found at S384. Positions 466 to 483 (SDGSSVSYQTDRTDQTPC) are enriched in polar residues. The interval 466–489 (SDGSSVSYQTDRTDQTPCTPDDDL) is disordered. 2 coiled-coil regions span residues 493–621 (MAKE…RERK) and 683–834 (VLTL…FLFL).

Belongs to the JAKMIP family. Specifically expressed in the CNS and endocrine tissues. Also detected in other tissues including heart, testis and prostate.

The protein localises to the golgi apparatus. This Homo sapiens (Human) protein is Janus kinase and microtubule-interacting protein 3 (JAKMIP3).